Consider the following 259-residue polypeptide: Small ribosomal subunit protein uS2 (259 aa).

The interval 234–259 (VAEDSEEVSTVDADAITAEDFETEEV) is disordered. Residues 250–259 (TAEDFETEEV) are compositionally biased toward acidic residues.

Belongs to the universal ribosomal protein uS2 family.

This chain is Small ribosomal subunit protein uS2, found in Sulfurimonas denitrificans (strain ATCC 33889 / DSM 1251) (Thiomicrospira denitrificans (strain ATCC 33889 / DSM 1251)).